The following is a 249-amino-acid chain: DNA polymerase sliding clamp (249 aa).

It belongs to the PCNA family. As to quaternary structure, the subunits circularize to form a toroid; DNA passes through its center. Replication factor C (RFC) is required to load the toroid on the DNA. Homotrimer. Interacts with NucS.

Functionally, sliding clamp subunit that acts as a moving platform for DNA processing. Responsible for tethering the catalytic subunit of DNA polymerase and other proteins to DNA during high-speed replication. Regulates activity of NucS endonuclease and prevents non-specific cleavage. The sequence is that of DNA polymerase sliding clamp from Pyrococcus abyssi (strain GE5 / Orsay).